Consider the following 499-residue polypeptide: MSSTSLYAAIDLGSNSFHMLVVREVAGSIQTLSRIKRKVRLAAGLNSDNTLSAEAMERGWQCLRLFAERLQDIPPTQIRVVATATLRLAVNAGEFLAKAQEILGTPVQVISGEEEARLIYQGVAHTTGGADQRLVVDIGGASTELVTGTGAQTTSLFSLSMGCVTWLERYFADRSLTKENFDLAEAAAREVLLPVADVLRYHGWKVCVGASGTVQALQEIMMAQGMDERITLAKLQQLKQRAIQCGRLEELEIEGLTLERALVFPSGLAILIAIFSELNIQCMTLAGGALREGLVYGMLHLSVEQDIRSRTLRNIQRRFMIDTEQAQRVGGLASHLLSQLDGSWELDPLSRDLLLSACALHEIGLSVDFKRAPQHAAYLVNNLDLPGFTPAQKKLIATLLLNQTNAIDLSSLHQQNAVPPRVAEHLCRLLRLAILFASRRRDDLLPAIQLTAQDEQLTLILPGNWLDEHPLGREMVDQECQWQSYVHWILRVASGDTLK.

This sequence belongs to the GppA/Ppx family. GppA subfamily.

It carries out the reaction guanosine 3'-diphosphate 5'-triphosphate + H2O = guanosine 3',5'-bis(diphosphate) + phosphate + H(+). It participates in purine metabolism; ppGpp biosynthesis; ppGpp from GTP: step 2/2. Its function is as follows. Catalyzes the conversion of pppGpp to ppGpp. Guanosine pentaphosphate (pppGpp) is a cytoplasmic signaling molecule which together with ppGpp controls the 'stringent response', an adaptive process that allows bacteria to respond to amino acid starvation, resulting in the coordinated regulation of numerous cellular activities. This chain is Guanosine-5'-triphosphate,3'-diphosphate pyrophosphatase, found in Klebsiella pneumoniae subsp. pneumoniae (strain ATCC 700721 / MGH 78578).